Reading from the N-terminus, the 580-residue chain is Arginine--tRNA ligase (580 aa).

The 'HIGH' region signature appears at 131 to 141 (ANPTGPLHVGH).

The protein belongs to the class-I aminoacyl-tRNA synthetase family. Monomer.

It is found in the cytoplasm. The catalysed reaction is tRNA(Arg) + L-arginine + ATP = L-arginyl-tRNA(Arg) + AMP + diphosphate. The protein is Arginine--tRNA ligase of Roseobacter denitrificans (strain ATCC 33942 / OCh 114) (Erythrobacter sp. (strain OCh 114)).